A 154-amino-acid chain; its full sequence is Large ribosomal subunit protein uL13 (154 aa).

It belongs to the universal ribosomal protein uL13 family. Part of the 50S ribosomal subunit.

This protein is one of the early assembly proteins of the 50S ribosomal subunit, although it is not seen to bind rRNA by itself. It is important during the early stages of 50S assembly. In Bradyrhizobium sp. (strain BTAi1 / ATCC BAA-1182), this protein is Large ribosomal subunit protein uL13.